A 486-amino-acid chain; its full sequence is Glycogen synthase (486 aa).

Lys15 is a binding site for ADP-alpha-D-glucose.

It belongs to the glycosyltransferase 1 family. Bacterial/plant glycogen synthase subfamily.

It carries out the reaction [(1-&gt;4)-alpha-D-glucosyl](n) + ADP-alpha-D-glucose = [(1-&gt;4)-alpha-D-glucosyl](n+1) + ADP + H(+). It participates in glycan biosynthesis; glycogen biosynthesis. Functionally, synthesizes alpha-1,4-glucan chains using ADP-glucose. The chain is Glycogen synthase from Thermotoga petrophila (strain ATCC BAA-488 / DSM 13995 / JCM 10881 / RKU-1).